The following is a 665-amino-acid chain: Ion-translocating oxidoreductase complex subunit C (665 aa).

4Fe-4S ferredoxin-type domains are found at residues 368 to 398 (EYAE…QQLY) and 408 to 437 (KSEE…IQYF). Cys378, Cys381, Cys384, Cys388, Cys417, Cys420, Cys423, and Cys427 together coordinate [4Fe-4S] cluster. Basic and acidic residues-rich tracts occupy residues 465-477 (QARM…ERKA) and 485-513 (ARRE…KANE). Disordered stretches follow at residues 465-568 (QARM…DAKK), 580-623 (AKKL…LDPK), and 637-665 (KKLA…QIVR). Polar residues-rich tracts occupy residues 554-564 (VENQEQQTQPT) and 585-600 (QTNS…QTAE). The segment covering 602 to 615 (EVEKTKSAVEKTEE) has biased composition (basic and acidic residues). Polar residues predominate over residues 643-656 (NSTSEAISNSQTAE).

It belongs to the 4Fe4S bacterial-type ferredoxin family. RnfC subfamily. As to quaternary structure, the complex is composed of six subunits: RnfA, RnfB, RnfC, RnfD, RnfE and RnfG. [4Fe-4S] cluster is required as a cofactor.

Its subcellular location is the cell inner membrane. In terms of biological role, part of a membrane-bound complex that couples electron transfer with translocation of ions across the membrane. This Haemophilus influenzae (strain 86-028NP) protein is Ion-translocating oxidoreductase complex subunit C.